Consider the following 93-residue polypeptide: uncharacterized protein (93 aa).

This sequence belongs to the SIMIBI class G3E GTPase family. ArgK/MeaB subfamily.

This is an uncharacterized protein from Streptomyces virginiae (Streptomyces cinnamonensis).